A 169-amino-acid polypeptide reads, in one-letter code: Endoribonuclease YbeY (169 aa).

Positions 128, 132, and 138 each coordinate Zn(2+).

This sequence belongs to the endoribonuclease YbeY family. Zn(2+) serves as cofactor.

The protein localises to the cytoplasm. Functionally, single strand-specific metallo-endoribonuclease involved in late-stage 70S ribosome quality control and in maturation of the 3' terminus of the 16S rRNA. The chain is Endoribonuclease YbeY from Cyanothece sp. (strain PCC 7425 / ATCC 29141).